We begin with the raw amino-acid sequence, 555 residues long: CTP synthase (555 aa).

The tract at residues 1–265 is amidoligase domain; sequence MTRYIFITGG…GNRVCEKLNI (265 aa). S13 is a CTP binding site. A UTP-binding site is contributed by S13. ATP is bound by residues 14–19 and D71; that span reads SLGKGI. Positions 71 and 139 each coordinate Mg(2+). Residues 146–148, 186–191, and K222 each bind CTP; these read DIE and KTKPTQ. Residues 186–191 and K222 each bind UTP; that span reads KTKPTQ. One can recognise a Glutamine amidotransferase type-1 domain in the interval 290-541; the sequence is TVAVVGKYVD…IKAGLAAKEA (252 aa). G351 lines the L-glutamine pocket. Catalysis depends on C378, which acts as the Nucleophile; for glutamine hydrolysis. L-glutamine is bound by residues 379 to 382, E402, and R469; that span reads LGMQ. Residues H514 and E516 contribute to the active site.

It belongs to the CTP synthase family. In terms of assembly, homotetramer.

It carries out the reaction UTP + L-glutamine + ATP + H2O = CTP + L-glutamate + ADP + phosphate + 2 H(+). The catalysed reaction is L-glutamine + H2O = L-glutamate + NH4(+). It catalyses the reaction UTP + NH4(+) + ATP = CTP + ADP + phosphate + 2 H(+). Its pathway is pyrimidine metabolism; CTP biosynthesis via de novo pathway; CTP from UDP: step 2/2. Its activity is regulated as follows. Allosterically activated by GTP, when glutamine is the substrate; GTP has no effect on the reaction when ammonia is the substrate. The allosteric effector GTP functions by stabilizing the protein conformation that binds the tetrahedral intermediate(s) formed during glutamine hydrolysis. Inhibited by the product CTP, via allosteric rather than competitive inhibition. In terms of biological role, catalyzes the ATP-dependent amination of UTP to CTP with either L-glutamine or ammonia as the source of nitrogen. Regulates intracellular CTP levels through interactions with the four ribonucleotide triphosphates. In Coxiella burnetii (strain RSA 331 / Henzerling II), this protein is CTP synthase.